The primary structure comprises 167 residues: UPF0114 protein Tola_1474 (167 aa).

A run of 4 helical transmembrane segments spans residues 15–35, 53–73, 109–129, and 136–156; these read IMAPIYLGLSLALLALGIKFF, LILIILSLIDISLVGGLIVMV, VAASIVAISSIHLLKVFMNTE, and IKWYLLIHITFVMSAFAMGYL.

It belongs to the UPF0114 family.

The protein localises to the cell membrane. The sequence is that of UPF0114 protein Tola_1474 from Tolumonas auensis (strain DSM 9187 / NBRC 110442 / TA 4).